Here is a 215-residue protein sequence, read N- to C-terminus: Probable phosphoglycerate mutase GpmB (215 aa).

Residues 8-15 (RHGETQWN), 21-22 (QG), arginine 58, arginine 60, 82-85 (ELDM), 104-105 (RR), and 151-152 (GI) each bind substrate. The Tele-phosphohistidine intermediate role is filled by histidine 9. Residue glutamate 82 is the Proton donor/acceptor of the active site.

Belongs to the phosphoglycerate mutase family. GpmB subfamily.

It catalyses the reaction (2R)-2-phosphoglycerate = (2R)-3-phosphoglycerate. It functions in the pathway carbohydrate degradation; glycolysis; pyruvate from D-glyceraldehyde 3-phosphate: step 3/5. This chain is Probable phosphoglycerate mutase GpmB, found in Klebsiella pneumoniae subsp. pneumoniae (strain ATCC 700721 / MGH 78578).